The chain runs to 108 residues: Probable 4-amino-4-deoxy-L-arabinose-phosphoundecaprenol flippase subunit ArnE (108 aa).

Helical transmembrane passes span 36-56 (SLWLALACLGSGLLIWLLVLQ), 58-78 (LDVGIAYPMLGVNFVLITLAG), and 85-105 (PVDVRHWLGIALILVGVFQLG).

This sequence belongs to the ArnE family. In terms of assembly, heterodimer of ArnE and ArnF.

It is found in the cell inner membrane. It participates in bacterial outer membrane biogenesis; lipopolysaccharide biosynthesis. In terms of biological role, translocates 4-amino-4-deoxy-L-arabinose-phosphoundecaprenol (alpha-L-Ara4N-phosphoundecaprenol) from the cytoplasmic to the periplasmic side of the inner membrane. This Pseudomonas syringae pv. syringae (strain B728a) protein is Probable 4-amino-4-deoxy-L-arabinose-phosphoundecaprenol flippase subunit ArnE.